The chain runs to 329 residues: MKIIFAGTPEFARVALERLLAAGAEVPLVLTQPDRPAGRGMKLQASPVKQCALAHGIAVAQPRGLRLDGRYAEDAAAARAALEAAGADAMVVAAYGLILPQWVLDLPRLGCLNIHASLLPRWRGAAPIHRAIEAGDAETGVTIMQMDAGLDTGAMLLIEKTAIAPRETTATLHDRLADLGGRLIVEAMELAACGGLAATPQPAEGVTYAHKIEKAESAIDWKLPAAAIDRRVRAFDPFPGASTQCSAETIKVWGCEPLQVPPPEGAQPGEILQVDDAGVDVACGGPDGAAGVLRLTVLQRAGGKRLPVGDFLRGHPLAPGMVLGGGAGA.

Residue 117-120 (SLLP) participates in (6S)-5,6,7,8-tetrahydrofolate binding.

This sequence belongs to the Fmt family.

It catalyses the reaction L-methionyl-tRNA(fMet) + (6R)-10-formyltetrahydrofolate = N-formyl-L-methionyl-tRNA(fMet) + (6S)-5,6,7,8-tetrahydrofolate + H(+). Functionally, attaches a formyl group to the free amino group of methionyl-tRNA(fMet). The formyl group appears to play a dual role in the initiator identity of N-formylmethionyl-tRNA by promoting its recognition by IF2 and preventing the misappropriation of this tRNA by the elongation apparatus. The sequence is that of Methionyl-tRNA formyltransferase from Paracidovorax citrulli (strain AAC00-1) (Acidovorax citrulli).